A 166-amino-acid polypeptide reads, in one-letter code: Large ribosomal subunit protein eL21 (166 aa).

It belongs to the eukaryotic ribosomal protein eL21 family. As to quaternary structure, component of the large ribosomal subunit.

The protein localises to the cytoplasm. It localises to the cytosol. The protein resides in the endoplasmic reticulum. Its function is as follows. Component of the large ribosomal subunit. The ribosome is a large ribonucleoprotein complex responsible for the synthesis of proteins in the cell. The protein is Large ribosomal subunit protein eL21 (RPL21) of Entamoeba histolytica (strain ATCC 30459 / HM-1:IMSS / ABRM).